A 152-amino-acid chain; its full sequence is D-aminoacyl-tRNA deacylase (152 aa).

Positions G137–P138 match the Gly-cisPro motif, important for rejection of L-amino acids motif.

The protein belongs to the DTD family. As to quaternary structure, homodimer.

The protein resides in the cytoplasm. The catalysed reaction is glycyl-tRNA(Ala) + H2O = tRNA(Ala) + glycine + H(+). It catalyses the reaction a D-aminoacyl-tRNA + H2O = a tRNA + a D-alpha-amino acid + H(+). An aminoacyl-tRNA editing enzyme that deacylates mischarged D-aminoacyl-tRNAs. Also deacylates mischarged glycyl-tRNA(Ala), protecting cells against glycine mischarging by AlaRS. Acts via tRNA-based rather than protein-based catalysis; rejects L-amino acids rather than detecting D-amino acids in the active site. By recycling D-aminoacyl-tRNA to D-amino acids and free tRNA molecules, this enzyme counteracts the toxicity associated with the formation of D-aminoacyl-tRNA entities in vivo and helps enforce protein L-homochirality. This chain is D-aminoacyl-tRNA deacylase, found in Thermus aquaticus.